A 229-amino-acid chain; its full sequence is Coiled-coil domain-containing protein 134 (229 aa).

A signal peptide spans 1–22; sequence MDLLQFLAFLFVLLLSGMGATG. A short sequence motif (prevents secretion from ER) is located at residue N148. N148 is a glycosylation site (N-linked (GlcNAc...) asparagine). Positions 193–229 are disordered; that stretch reads TDPFQKALREEEKRRKKEEKRKEIRKGPRISRSQSEL. Residues 196–218 adopt a coiled-coil conformation; that stretch reads FQKALREEEKRRKKEEKRKEIRK. The Nuclear localization signal signature appears at 206 to 213; that stretch reads RRKKEEKR.

The protein belongs to the CCDC134 family. In terms of assembly, interacts with TADA2A. Associates with the PCAF complex via TADA2A binding. In terms of processing, O-glycosylated, with additional sialic acid modifications. Expressed in cervical gland, cervical squamous epithelium, endometrium, stomach, kidney distal convoluted tubule, spermatogenic cells in testis, mammary gland, liver and striated muscle (at protein level). Also detected in placenta. Highest expression in testis relative to other tissues. Detected in T cells and dendritic cells; highly expressed in activated CD8(+) T cells, and also expressed at lower levels in CD4(+) T cells.

The protein resides in the endoplasmic reticulum lumen. It is found in the secreted. It localises to the cytoplasm. The protein localises to the nucleus. Molecular adapter required to prevent protein hyperglycosylation of HSP90B1: during translation, associates with nascent HSP90B1 and the STT3A catalytic component of the OST-A complex and tethers them to a specialized translocon that forms a microenvironment for HSP90B1 folding. In the CCDC134-containing translocon, STT3A associates with the SRT pseudosubstrate motif of HSP90B1, preventing access to facultative glycosylation sites until folding is completed, preventing hyperglycosylation and subsequent degradation of HSP90B1. In extracellular secreted form, promotes proliferation and activation of CD8(+) T-cells, suggesting a cytokine-like function. May inhibit ERK and JNK signaling activity. May suppress cell migration and invasion activity, via its effects on ERK and JNK signaling. May also localize in the nucleus: enhances stability of the PCAF histone acetyltransferase (HAT) complex member TADA2A and thus promotes PCAF-mediated histone acetyltransferase activity. Has a critical role in the regulation of osteogenesis and bone development. The polypeptide is Coiled-coil domain-containing protein 134 (Homo sapiens (Human)).